A 226-amino-acid chain; its full sequence is Isoprenyl transferase (226 aa).

Aspartate 12 is an active-site residue. Aspartate 12 provides a ligand contact to Mg(2+). Residues 13-16 (GNAR), tryptophan 17, lysine 25, histidine 29, and 57-59 (SSE) each bind substrate. Asparagine 60 serves as the catalytic Proton acceptor. Substrate is bound by residues tryptophan 61, arginine 63, arginine 174, and 180-182 (RIS). Glutamate 193 lines the Mg(2+) pocket.

The protein belongs to the UPP synthase family. As to quaternary structure, homodimer. Mg(2+) is required as a cofactor.

In terms of biological role, catalyzes the condensation of isopentenyl diphosphate (IPP) with allylic pyrophosphates generating different type of terpenoids. This is Isoprenyl transferase from Rickettsia bellii (strain RML369-C).